The following is a 152-amino-acid chain: Lipoprotein signal peptidase (152 aa).

2 helical membrane-spanning segments follow: residues 55 to 75 (NKMW…VFYM) and 85 to 105 (LGIS…DRVF). Active-site residues include Asp111 and Asp129. A helical transmembrane segment spans residues 124-144 (VFNIADSALCIGVVLIIIQTL).

The protein belongs to the peptidase A8 family.

The protein localises to the cell membrane. It catalyses the reaction Release of signal peptides from bacterial membrane prolipoproteins. Hydrolyzes -Xaa-Yaa-Zaa-|-(S,diacylglyceryl)Cys-, in which Xaa is hydrophobic (preferably Leu), and Yaa (Ala or Ser) and Zaa (Gly or Ala) have small, neutral side chains.. It participates in protein modification; lipoprotein biosynthesis (signal peptide cleavage). Its function is as follows. This protein specifically catalyzes the removal of signal peptides from prolipoproteins. The polypeptide is Lipoprotein signal peptidase (Bacillus cereus (strain ZK / E33L)).